Here is a 209-residue protein sequence, read N- to C-terminus: Thymidylate kinase (209 aa).

Residue 10–17 (GIDGCGKS) coordinates ATP.

Belongs to the thymidylate kinase family.

It carries out the reaction dTMP + ATP = dTDP + ADP. Its function is as follows. Phosphorylation of dTMP to form dTDP in both de novo and salvage pathways of dTTP synthesis. The chain is Thymidylate kinase from Synechococcus sp. (strain CC9902).